A 362-amino-acid polypeptide reads, in one-letter code: Terpene synthase 3 (362 aa).

The DDxx(x)D/E motif signature appears at 90–95 (DDFLER). The NDxxSxxxD/E motif motif lies at 239–247 (NDCVSYAKE).

It belongs to the terpene synthase family.

It carries out the reaction (2E,6E)-farnesyl diphosphate = beta-maaliene + diphosphate. The catalysed reaction is (2E,6E)-farnesyl diphosphate = aristolene + diphosphate. The enzyme catalyses (2E,6E)-farnesyl diphosphate = calarene + diphosphate. It catalyses the reaction (2E)-geranyl diphosphate = (E)-beta-ocimene + diphosphate. It carries out the reaction (2E)-geranyl diphosphate = (Z)-beta-ocimene + diphosphate. The catalysed reaction is (2E)-geranyl diphosphate + H2O = linalool + diphosphate. The enzyme catalyses (2E)-geranyl diphosphate = beta-myrcene + diphosphate. Its function is as follows. Terpene synthase that converts its substrate farnesyl diphosphate (FPP) into an unidentified sesquiterpene as a major product, as well as beta-maaliene, aristolene, calarene and 2 additional unidentified sesquiterpene as minor products. Is also able to convert geranyl diphosphate (GPP) into a mixture of monoterpenes including (Z)-beta-ocimene, (E)-beta-ocimene, allo-ocimene, linalool and beta-myrcene. This chain is Terpene synthase 3, found in Dictyostelium discoideum (Social amoeba).